The chain runs to 201 residues: dTDP-4-dehydrorhamnose 3,5-epimerase (201 aa).

Substrate is bound by residues Arg23, Glu28, Gln47–Asn49, and Arg59. Residue His62 is the Proton acceptor of the active site. 2 residues coordinate substrate: Lys72 and His119. Tyr132 acts as the Proton donor in catalysis. 2 residues coordinate substrate: Glu143 and Arg166.

This sequence belongs to the dTDP-4-dehydrorhamnose 3,5-epimerase family. As to quaternary structure, homodimer.

The catalysed reaction is dTDP-4-dehydro-6-deoxy-alpha-D-glucose = dTDP-4-dehydro-beta-L-rhamnose. It participates in carbohydrate biosynthesis; dTDP-L-rhamnose biosynthesis. Catalyzes the epimerization of the C3' and C5'positions of dTDP-6-deoxy-D-xylo-4-hexulose, forming dTDP-6-deoxy-L-lyxo-4-hexulose. Involved in the biosynthesis of the dTDP-L-rhamnose which is a component of the critical linker, D-N-acetylglucosamine-L-rhamnose disaccharide, which connects the galactan region of arabinogalactan to peptidoglycan via a phosphodiester linkage. The chain is dTDP-4-dehydrorhamnose 3,5-epimerase (rmlC) from Mycolicibacterium smegmatis (strain ATCC 700084 / mc(2)155) (Mycobacterium smegmatis).